Reading from the N-terminus, the 874-residue chain is Alanine--tRNA ligase (874 aa).

Zn(2+) contacts are provided by His564, His568, Cys665, and His669.

Belongs to the class-II aminoacyl-tRNA synthetase family. Zn(2+) is required as a cofactor.

It localises to the cytoplasm. The enzyme catalyses tRNA(Ala) + L-alanine + ATP = L-alanyl-tRNA(Ala) + AMP + diphosphate. Functionally, catalyzes the attachment of alanine to tRNA(Ala) in a two-step reaction: alanine is first activated by ATP to form Ala-AMP and then transferred to the acceptor end of tRNA(Ala). Also edits incorrectly charged Ser-tRNA(Ala) and Gly-tRNA(Ala) via its editing domain. The chain is Alanine--tRNA ligase from Delftia acidovorans (strain DSM 14801 / SPH-1).